Here is a 397-residue protein sequence, read N- to C-terminus: GDNF family receptor alpha-3 (397 aa).

A signal peptide spans 1–28 (MGLSWSPRPPLLMILLLVLSLWLPLGAG). Residues Cys48 and Cys54 are joined by a disulfide bond. N-linked (GlcNAc...) asparagine glycosylation is found at Asn92 and Asn145. Disulfide bonds link Cys159–Cys215, Cys166–Cys172, Cys183–Cys193, Cys188–Cys236, Cys217–Cys224, Cys245–Cys313, Cys252–Cys258, Cys269–Cys285, Cys278–Cys337, and Cys315–Cys325. N-linked (GlcNAc...) asparagine glycosylation is present at Asn306. Residue Asn371 is the site of GPI-anchor amidated asparagine attachment. The propeptide at 372–397 (PALRLQPRLPILSFSILPLILLQTLW) is removed in mature form.

The protein belongs to the GDNFR family. As to quaternary structure, interacts with ARTN ligand and RET: forms a 2:2:2 ternary complex composed of ARTN ligand, GFRA3 and RET receptor. Interacts with SORL1.

It localises to the cell membrane. Its function is as follows. Receptor for artemin (ARTN), a growth factor that supports the survival of sensory and sympathetic peripheral neurons. ARTN-binding leads to autophosphorylation and activation of the RET receptor. This is GDNF family receptor alpha-3 (Gfra3) from Mus musculus (Mouse).